Here is a 564-residue protein sequence, read N- to C-terminus: Lamassu protein LmuB (564 aa).

Its function is as follows. Component of antiviral defense system Lamassu type II, composed of LmuA and LmuB. Expression of Lamassu type II in B.subtilis (strain BEST7003) confers resistance to phage SpBeta. May be an ATPase. This Bacillus cereus (strain VD014) protein is Lamassu protein LmuB.